Reading from the N-terminus, the 763-residue chain is Ribonucleoside-diphosphate reductase subunit alpha (763 aa).

Positions 5–95 (LFVTKRNGKK…IFHLRKKAYG (91 aa)) constitute an ATP-cone domain. Residues Lys-9, 15–21 (EKINLDK), Thr-55, and Lys-91 contribute to the ATP site. Thr-209 lines the GDP pocket. A disulfide bond links Cys-225 and Cys-462. Residues 232-234 (DNL), Arg-262, and Arg-269 contribute to the dTTP site. Asn-437 contacts GDP. Asn-437 (proton acceptor) is an active-site residue. The active-site Cysteine radical intermediate is the Cys-439. GDP contacts are provided by residues Glu-441 and 623–625 (ETS). Residue Glu-441 is the Proton acceptor of the active site.

This sequence belongs to the ribonucleoside diphosphate reductase large chain family. In terms of assembly, tetramer of two alpha and two beta subunits.

It catalyses the reaction a 2'-deoxyribonucleoside 5'-diphosphate + [thioredoxin]-disulfide + H2O = a ribonucleoside 5'-diphosphate + [thioredoxin]-dithiol. Its activity is regulated as follows. Under complex allosteric control mediated by deoxynucleoside triphosphates and ATP binding to separate specificity and activation sites on the alpha subunit. The type of nucleotide bound at the specificity site determines substrate preference. It seems probable that ATP makes the enzyme reduce CDP and UDP, dGTP favors ADP reduction and dTTP favors GDP reduction. Stimulated by ATP and inhibited by dATP binding to the activity site. Functionally, provides the precursors necessary for DNA synthesis. Catalyzes the biosynthesis of deoxyribonucleotides from the corresponding ribonucleotides. In Buchnera aphidicola subsp. Schizaphis graminum (strain Sg), this protein is Ribonucleoside-diphosphate reductase subunit alpha (nrdA).